Reading from the N-terminus, the 246-residue chain is MPKKFIVANWKMHKTVREALAFLDEFIPITKGLNGREIGIAPTFICIESVGKVLINTSIKLCAQNAFYENKGAYTGEVSPAMLKDCGVEYVIIGHSERRKYFYENDDIINKKIHACIKEGLKVIFCIGETFEDRQNNKTMEILKTQIRNGLLEINSPEALTIAYEPVWAIGTGVVATEEQIKQSHLFIRNQLKEIYGERANEVRILYGGSVTPENIKSIMAIDNVEGVLVGGASLDPLKFAKIVKY.

Substrate is bound at residue 9 to 11; sequence NWK. The active-site Electrophile is His95. The Proton acceptor role is filled by Glu165. Substrate contacts are provided by residues Gly171, Ser210, and 231 to 232; that span reads GG.

The protein belongs to the triosephosphate isomerase family. As to quaternary structure, homodimer.

It localises to the cytoplasm. It carries out the reaction D-glyceraldehyde 3-phosphate = dihydroxyacetone phosphate. Its pathway is carbohydrate biosynthesis; gluconeogenesis. It functions in the pathway carbohydrate degradation; glycolysis; D-glyceraldehyde 3-phosphate from glycerone phosphate: step 1/1. In terms of biological role, involved in the gluconeogenesis. Catalyzes stereospecifically the conversion of dihydroxyacetone phosphate (DHAP) to D-glyceraldehyde-3-phosphate (G3P). The protein is Triosephosphate isomerase of Thermodesulfovibrio yellowstonii (strain ATCC 51303 / DSM 11347 / YP87).